The following is a 243-amino-acid chain: Complement C1q tumor necrosis factor-related protein 5 (243 aa).

The signal sequence occupies residues 1 to 15 (MRPLLALLLLGLASG). Residues 15–124 (GSPPLDDNKI…VPPPADTPLP (110 aa)) are disordered. The region spanning 30-95 (GQPGLPGTPG…AGPVGAIGPA (66 aa)) is the Collagen-like domain. The region spanning 99–238 (SVPPRSAFSA…GFLVYSDWHS (140 aa)) is the C1q domain.

In terms of assembly, homotrimer (via collagen-like domain). May form higher order oligomers by supercoiling of the trimers. May interact with ERFE.

It is found in the secreted. The sequence is that of Complement C1q tumor necrosis factor-related protein 5 (C1qtnf5) from Rattus norvegicus (Rat).